The primary structure comprises 394 residues: Probable peptidoglycan glycosyltransferase FtsW (394 aa).

At 1–26 (MNTMRPRHLNQRGKPVSRPISLYDKW) the chain is on the cytoplasmic side. The chain crosses the membrane as a helical span at residues 27-47 (LIGAVFGLLIIGLMMVASSSV). Residues 48–57 (MISTKYFHQP) are Periplasmic-facing. Residues 58-78 (FHFLIRQACYLFVGLLLALIV) traverse the membrane as a helical segment. The Cytoplasmic segment spans residues 79–88 (VRTDSSFWEK). Residues 89 to 109 (ISMPMMIGCVFLLLIVLIPGI) form a helical membrane-spanning segment. Topologically, residues 110–118 (GKSVNGSRR) are periplasmic. Residues 119–139 (WLALGPIGVQVSELTKLAMIF) traverse the membrane as a helical segment. Residues 140–154 (YLSGYLVRQQEAVCE) are Cytoplasmic-facing. The helical transmembrane segment at 155–175 (SIFGFIKPMAILAVVSVLLLL) threads the bilayer. Residues 176–177 (EP) lie on the Periplasmic side of the membrane. Residues 178–198 (DFGATVVISGTVMAMLFLAGV) form a helical membrane-spanning segment. Over 199-201 (KLR) the chain is Cytoplasmic. A helical transmembrane segment spans residues 202–222 (YYFGLMLVVVTALALLAVSSP). At 223-278 (YRVARLTAFLDPWADQYNSGYQLTQSLIAFGRGGWFGTGLGESIQKLLYLPEAHTD) the chain is on the periplasmic side. A helical transmembrane segment spans residues 279-299 (FLFAVIAEELGLFGILVVITL). At 300 to 327 (YSILVIRGLNIGYTAYTQERHFASYTAY) the chain is on the cytoplasmic side. A helical transmembrane segment spans residues 328–348 (GLTIWLALQASINMGVNAGLL). Over 349-354 (PTKGLT) the chain is Periplasmic. Residues 355–375 (LPLLSYGGASMVINCIVIALL) traverse the membrane as a helical segment. Residues 376–394 (LRIDHENRWQSLGLRPLTA) are Cytoplasmic-facing.

It belongs to the SEDS family. FtsW subfamily.

The protein localises to the cell inner membrane. The enzyme catalyses [GlcNAc-(1-&gt;4)-Mur2Ac(oyl-L-Ala-gamma-D-Glu-L-Lys-D-Ala-D-Ala)](n)-di-trans,octa-cis-undecaprenyl diphosphate + beta-D-GlcNAc-(1-&gt;4)-Mur2Ac(oyl-L-Ala-gamma-D-Glu-L-Lys-D-Ala-D-Ala)-di-trans,octa-cis-undecaprenyl diphosphate = [GlcNAc-(1-&gt;4)-Mur2Ac(oyl-L-Ala-gamma-D-Glu-L-Lys-D-Ala-D-Ala)](n+1)-di-trans,octa-cis-undecaprenyl diphosphate + di-trans,octa-cis-undecaprenyl diphosphate + H(+). The protein operates within cell wall biogenesis; peptidoglycan biosynthesis. In terms of biological role, peptidoglycan polymerase that is essential for cell division. This Legionella pneumophila subsp. pneumophila (strain Philadelphia 1 / ATCC 33152 / DSM 7513) protein is Probable peptidoglycan glycosyltransferase FtsW.